The sequence spans 588 residues: Mediator of RNA polymerase II transcription subunit 26 (588 aa).

The 78-residue stretch at 10-87 (QMRDRLLQAI…RSWQKLIEPV (78 aa)) folds into the TFIIS N-terminal domain. Disordered stretches follow at residues 112 to 393 (RPEM…YTVN) and 412 to 441 (KLTF…PTEQ). Residues 123 to 133 (SIHDLKNRNDI) are compositionally biased toward basic and acidic residues. Positions 179–191 (PLPTNGISGSPES) are enriched in polar residues. Basic and acidic residues predominate over residues 207–218 (SRLEPSDNEKHS). A compositionally biased stretch (pro residues) spans 314-325 (SPLPLAQPPTPP). A phosphoserine mark is found at Ser-435 and Ser-458.

It belongs to the Mediator complex subunit 26 family. As to quaternary structure, component of the Mediator complex, which is composed of MED1, MED4, MED6, MED7, MED8, MED9, MED10, MED11, MED12, MED13, MED13L, MED14, MED15, MED16, MED17, MED18, MED19, MED20, MED21, MED22, MED23, MED24, MED25, MED26, MED27, MED29, MED30, MED31, CCNC, CDK8 and CDC2L6/CDK11. The MED12, MED13, CCNC and CDK8 subunits form a distinct module termed the CDK8 module. Mediator containing the CDK8 module is less active than Mediator lacking this module in supporting transcriptional activation. Individual preparations of the Mediator complex lacking one or more distinct subunits have been variously termed ARC, CRSP, DRIP, PC2, SMCC and TRAP. Interacts with CEBPB (when not methylated).

The protein localises to the nucleus. Its function is as follows. Component of the Mediator complex, a coactivator involved in the regulated transcription of nearly all RNA polymerase II-dependent genes. Mediator functions as a bridge to convey information from gene-specific regulatory proteins to the basal RNA polymerase II transcription machinery. Mediator is recruited to promoters by direct interactions with regulatory proteins and serves as a scaffold for the assembly of a functional pre-initiation complex with RNA polymerase II and the general transcription factors. This Mus musculus (Mouse) protein is Mediator of RNA polymerase II transcription subunit 26 (Med26).